The chain runs to 315 residues: Glutamyl-Q tRNA(Asp) synthetase (315 aa).

L-glutamate contacts are provided by residues 21-25 (RFAPS) and glutamate 63. The 'HIGH' region motif lies at 24–34 (PSPSGLLHFGS). The Zn(2+) site is built by cysteine 119, cysteine 121, tyrosine 133, and cysteine 137. Tyrosine 190 and arginine 208 together coordinate L-glutamate. A 'KMSKS' region motif is present at residues 251-255 (KLSKQ). ATP is bound at residue lysine 254.

This sequence belongs to the class-I aminoacyl-tRNA synthetase family. GluQ subfamily. It depends on Zn(2+) as a cofactor.

Catalyzes the tRNA-independent activation of glutamate in presence of ATP and the subsequent transfer of glutamate onto a tRNA(Asp). Glutamate is transferred on the 2-amino-5-(4,5-dihydroxy-2-cyclopenten-1-yl) moiety of the queuosine in the wobble position of the QUC anticodon. This chain is Glutamyl-Q tRNA(Asp) synthetase, found in Colwellia psychrerythraea (strain 34H / ATCC BAA-681) (Vibrio psychroerythus).